The following is a 610-amino-acid chain: DNA mismatch repair protein MutL (610 aa).

Belongs to the DNA mismatch repair MutL/HexB family.

This protein is involved in the repair of mismatches in DNA. It is required for dam-dependent methyl-directed DNA mismatch repair. May act as a 'molecular matchmaker', a protein that promotes the formation of a stable complex between two or more DNA-binding proteins in an ATP-dependent manner without itself being part of a final effector complex. This is DNA mismatch repair protein MutL from Rickettsia peacockii (strain Rustic).